The following is a 179-amino-acid chain: Large ribosomal subunit protein uL5 (179 aa).

The protein belongs to the universal ribosomal protein uL5 family. As to quaternary structure, part of the 50S ribosomal subunit; part of the 5S rRNA/L5/L18/L25 subcomplex. Contacts the 5S rRNA and the P site tRNA. Forms a bridge to the 30S subunit in the 70S ribosome.

Its function is as follows. This is one of the proteins that bind and probably mediate the attachment of the 5S RNA into the large ribosomal subunit, where it forms part of the central protuberance. In the 70S ribosome it contacts protein S13 of the 30S subunit (bridge B1b), connecting the 2 subunits; this bridge is implicated in subunit movement. Contacts the P site tRNA; the 5S rRNA and some of its associated proteins might help stabilize positioning of ribosome-bound tRNAs. The polypeptide is Large ribosomal subunit protein uL5 (Geotalea uraniireducens (strain Rf4) (Geobacter uraniireducens)).